The sequence spans 1001 residues: MKRIFSCSSTQVAVERWNRHDQKLLEAVHRGDVGRVAALASRKSARPTKLDSNGQSPFHLAASKGLTECLTILLANGADINSKNEDGSTALHLATISCQPQCVKVLLQHGANEDAVDAENRSPLHWAASSGCASSVLLLCDHEAFLDVLDNDGRTPLMIASLGGHAAICSQLLQRGARVNVTDKNDKSALILACEKGSAEVAELLLSHGADAGAVDSTGHDALHYALHTQDKALWRHLQQALSRRRRGGQRLVQHPDLASQASPSEPQAGSPPKSSWRAEPEEEQEEKEDEDPCSEEWRWKYEEERRKVVRLEQELVQKTEECKTQAAAYLDLENQIREQAQELGVLLSWEPRASGKQGSSLRPGGDGMEQGCPKDLLAESTQELKKQQQAAATVNPVLAPKKAEDSAPGKIQYEVHGRSQPEEQGPPQSPASETIRKATGQQLTTNGAQTFGPDHADQLPAGQKESSQVLGVEPGGTVAEPVGPAAMNQLLLQLREELAAVWREKDAARGALSRPVMEGALGTPRAEAAAAAWEKMEARLERVLARLEWAKAGLQVKPEVPSQESREGALKAAPGSIKQDEEKEKRVPGAQGEPLGALGGEKALGGLAKGQLEKEMSVLRLSNSNLLEELGELGRERQRLQRELQSLSQRLQREFVPKPQAQVQLQQLRQSVGLLTNELAMEKEATEKLRKLLASQSSGLRGLWDCLPADLVGERSAQSKAAESLEELRACISTLVDRHREAQQVLARLQEENQQLRGSLSPCREPGTSLKAPASPQVAALEQDLGKLEEELRAVQATMSGKSQEIGKLKQLLYQATEEVAELRAREAASLRQHEKTRGSLVAQAQAWGQELKALLEKYNTACREVGRLREAVAEERRRSGDLAAQAAEQERQASEMRGRSEQFEKTAELLKEKMEHLIGACRDKEAKIKELLKKLEQLSEEVLAIRGENARLALQLQDSQKNHEEIISTYRNHLLNAARGYMEHEVYNILLQILSMEEE.

6 ANK repeats span residues 53–82, 86–115, 119–148, 152–181, 185–214, and 218–247; these read NGQS…DINS, DGST…NEDA, ENRS…FLDV, DGRT…RVNV, NDKS…DAGA, and TGHD…RRRR. Disordered stretches follow at residues 256-296, 352-482, and 559-601; these read PDLA…PCSE, PRAS…VAEP, and PEVP…ALGG. The span at 281–295 shows a compositional bias: acidic residues; sequence PEEEQEEKEDEDPCS. Residues 295 to 344 are a coiled coil; that stretch reads SEEWRWKYEEERRKVVRLEQELVQKTEECKTQAAAYLDLENQIREQAQEL. Basic and acidic residues predominate over residues 402 to 422; it reads KKAEDSAPGKIQYEVHGRSQP. Over residues 423–434 the composition is skewed to low complexity; the sequence is EEQGPPQSPASE. The span at 440-450 shows a compositional bias: polar residues; sequence TGQQLTTNGAQ. Positions 579-588 are enriched in basic and acidic residues; sequence KQDEEKEKRV. 3 coiled-coil regions span residues 610–696, 733–810, and 851–968; these read KGQL…LLAS, ISTL…IGKL, and QELK…HEEI. The segment at 879-902 is disordered; sequence RRSGDLAAQAAEQERQASEMRGRS. Residues 890–902 show a composition bias toward basic and acidic residues; it reads EQERQASEMRGRS.

The sequence is that of Ankyrin repeat domain-containing protein 35 (ANKRD35) from Homo sapiens (Human).